Consider the following 218-residue polypeptide: Ribonuclease HII (218 aa).

The 194-residue stretch at 23-216 (RFLCGVDEAG…VREAIARGLV (194 aa)) folds into the RNase H type-2 domain. Residues D29, E30, and D125 each coordinate a divalent metal cation.

Belongs to the RNase HII family. Mn(2+) serves as cofactor. It depends on Mg(2+) as a cofactor.

It is found in the cytoplasm. The enzyme catalyses Endonucleolytic cleavage to 5'-phosphomonoester.. Endonuclease that specifically degrades the RNA of RNA-DNA hybrids. The chain is Ribonuclease HII from Cupriavidus pinatubonensis (strain JMP 134 / LMG 1197) (Cupriavidus necator (strain JMP 134)).